A 220-amino-acid polypeptide reads, in one-letter code: GTP cyclohydrolase 1 (220 aa).

Zn(2+)-binding residues include cysteine 109, histidine 112, and cysteine 180.

Belongs to the GTP cyclohydrolase I family. As to quaternary structure, toroid-shaped homodecamer, composed of two pentamers of five dimers.

It catalyses the reaction GTP + H2O = 7,8-dihydroneopterin 3'-triphosphate + formate + H(+). The protein operates within cofactor biosynthesis; 7,8-dihydroneopterin triphosphate biosynthesis; 7,8-dihydroneopterin triphosphate from GTP: step 1/1. The sequence is that of GTP cyclohydrolase 1 from Yersinia pseudotuberculosis serotype O:1b (strain IP 31758).